An 881-amino-acid polypeptide reads, in one-letter code: Alanine--tRNA ligase (881 aa).

Zn(2+)-binding residues include His-564, His-568, Cys-673, and His-677. Residues Gly-848 to Lys-867 are disordered.

It belongs to the class-II aminoacyl-tRNA synthetase family. Zn(2+) is required as a cofactor.

The protein resides in the cytoplasm. The enzyme catalyses tRNA(Ala) + L-alanine + ATP = L-alanyl-tRNA(Ala) + AMP + diphosphate. Functionally, catalyzes the attachment of alanine to tRNA(Ala) in a two-step reaction: alanine is first activated by ATP to form Ala-AMP and then transferred to the acceptor end of tRNA(Ala). Also edits incorrectly charged Ser-tRNA(Ala) and Gly-tRNA(Ala) via its editing domain. The chain is Alanine--tRNA ligase from Hyphomonas neptunium (strain ATCC 15444).